The chain runs to 35 residues: Dermonecrotic toxin LrSicTox-alphaI-1 (35 aa).

His11 is an active-site residue. Position 33 (Asp33) interacts with Mg(2+).

It belongs to the arthropod phospholipase D family. Class II subfamily. The cofactor is Mg(2+). Contains 2 disulfide bonds. As to expression, expressed by the venom gland.

The protein resides in the secreted. It carries out the reaction an N-(acyl)-sphingosylphosphocholine = an N-(acyl)-sphingosyl-1,3-cyclic phosphate + choline. The catalysed reaction is an N-(acyl)-sphingosylphosphoethanolamine = an N-(acyl)-sphingosyl-1,3-cyclic phosphate + ethanolamine. The enzyme catalyses a 1-acyl-sn-glycero-3-phosphocholine = a 1-acyl-sn-glycero-2,3-cyclic phosphate + choline. It catalyses the reaction a 1-acyl-sn-glycero-3-phosphoethanolamine = a 1-acyl-sn-glycero-2,3-cyclic phosphate + ethanolamine. Dermonecrotic toxins cleave the phosphodiester linkage between the phosphate and headgroup of certain phospholipids (sphingolipid and lysolipid substrates), forming an alcohol (often choline) and a cyclic phosphate. This toxin acts on sphingomyelin (SM). It may also act on ceramide phosphoethanolamine (CPE), lysophosphatidylcholine (LPC) and lysophosphatidylethanolamine (LPE), but not on lysophosphatidylserine (LPS), and lysophosphatidylglycerol (LPG). It acts by transphosphatidylation, releasing exclusively cyclic phosphate products as second products. Induces dermonecrosis, hemolysis, increased vascular permeability, edema, inflammatory response, and platelet aggregation. The chain is Dermonecrotic toxin LrSicTox-alphaI-1 from Loxosceles reclusa (Brown recluse spider).